Consider the following 218-residue polypeptide: Oxygen regulatory protein NreC (218 aa).

A Response regulatory domain is found at 2 to 119 (KIVIADDHAV…QLILAVRTVY (118 aa)). A 4-aspartylphosphate modification is found at aspartate 53. Residues 149-214 (SSDPFKILSK…ELVEYALKKK (66 aa)) enclose the HTH luxR-type domain. Residues 173-192 (NKDIAEKLFVSVKTVEAHKT) constitute a DNA-binding region (H-T-H motif).

Post-translationally, phosphorylated by NreB.

It is found in the cytoplasm. Its function is as follows. Member of the two-component regulatory system NreB/NreC involved in the control of dissimilatory nitrate/nitrite reduction in response to oxygen. Phosphorylated NreC binds to a GC-rich palindromic sequence at the promoters of the nitrate (narGHJI) and nitrite (nir) reductase operons, as well as the putative nitrate transporter gene narT, and activates their expression. The sequence is that of Oxygen regulatory protein NreC (nreC) from Staphylococcus epidermidis (strain ATCC 35984 / DSM 28319 / BCRC 17069 / CCUG 31568 / BM 3577 / RP62A).